A 541-amino-acid polypeptide reads, in one-letter code: Coiled-coil domain-containing protein 116 (541 aa).

The stretch at 79–102 (QVLDSLQTVVEQATERLAAMKTEA) forms a coiled coil. Residues 346–397 (LPGNSDLLQPSSKASIPTNREARGEPCDSLTTAYSPKTSHRKSKGRRGSPPN) form a disordered region. Positions 351-363 (DLLQPSSKASIPT) are enriched in polar residues. Residues 383–392 (TSHRKSKGRR) show a composition bias toward basic residues. Serine 394 is modified (phosphoserine).

The protein resides in the cytoplasm. It is found in the cytoskeleton. It localises to the microtubule organizing center. The protein localises to the centrosome. The sequence is that of Coiled-coil domain-containing protein 116 (Ccdc116) from Mus musculus (Mouse).